Here is a 360-residue protein sequence, read N- to C-terminus: Melanoma-associated antigen B16 (360 aa).

The interval 1–118 is disordered; sequence MSQKNPEYAA…GNSVIPPDQP (118 aa). Residues 9-19 are compositionally biased toward basic and acidic residues; it reads AADHDHTREEM. Polar residues predominate over residues 63 to 98; it reads CSSSQLLTASNQEDPAYETPSTSRGLQHPYVSSSES. In terms of domain architecture, MAGE spans 125–324; that stretch reads IDGKVNFLVN…TVFPSQYEEA (200 aa). A disordered region spans residues 340–360; sequence AGPSSASGESSSDMGSNVPHI. Positions 341-360 are enriched in low complexity; sequence GPSSASGESSSDMGSNVPHI.

This chain is Melanoma-associated antigen B16 (Mageb16), found in Rattus norvegicus (Rat).